A 122-amino-acid chain; its full sequence is Large ribosomal subunit protein uL14 (122 aa).

It belongs to the universal ribosomal protein uL14 family. In terms of assembly, part of the 50S ribosomal subunit. Forms a cluster with proteins L3 and L19. In the 70S ribosome, L14 and L19 interact and together make contacts with the 16S rRNA in bridges B5 and B8.

Binds to 23S rRNA. Forms part of two intersubunit bridges in the 70S ribosome. This is Large ribosomal subunit protein uL14 from Thermotoga maritima (strain ATCC 43589 / DSM 3109 / JCM 10099 / NBRC 100826 / MSB8).